The primary structure comprises 346 residues: Phenylalanine--tRNA ligase alpha subunit (346 aa).

Glutamate 264 lines the Mg(2+) pocket.

This sequence belongs to the class-II aminoacyl-tRNA synthetase family. Phe-tRNA synthetase alpha subunit type 1 subfamily. As to quaternary structure, tetramer of two alpha and two beta subunits. Mg(2+) is required as a cofactor.

It localises to the cytoplasm. The enzyme catalyses tRNA(Phe) + L-phenylalanine + ATP = L-phenylalanyl-tRNA(Phe) + AMP + diphosphate + H(+). The polypeptide is Phenylalanine--tRNA ligase alpha subunit (Leifsonia xyli subsp. xyli (strain CTCB07)).